A 350-amino-acid polypeptide reads, in one-letter code: Dihydroorotase (350 aa).

Zn(2+)-binding residues include histidine 17 and histidine 19. Substrate contacts are provided by residues 19–21 (HFR) and asparagine 45. Residues lysine 103, histidine 140, and histidine 178 each contribute to the Zn(2+) site. An N6-carboxylysine modification is found at lysine 103. Histidine 140 is a substrate binding site. Leucine 223 lines the substrate pocket. Aspartate 251 provides a ligand contact to Zn(2+). Residue aspartate 251 is part of the active site. Substrate is bound by residues histidine 255 and alanine 267.

Belongs to the metallo-dependent hydrolases superfamily. DHOase family. Class II DHOase subfamily. Homodimer. The cofactor is Zn(2+).

It carries out the reaction (S)-dihydroorotate + H2O = N-carbamoyl-L-aspartate + H(+). The protein operates within pyrimidine metabolism; UMP biosynthesis via de novo pathway; (S)-dihydroorotate from bicarbonate: step 3/3. Its function is as follows. Catalyzes the reversible cyclization of carbamoyl aspartate to dihydroorotate. This is Dihydroorotase from Photorhabdus laumondii subsp. laumondii (strain DSM 15139 / CIP 105565 / TT01) (Photorhabdus luminescens subsp. laumondii).